Here is a 267-residue protein sequence, read N- to C-terminus: Putative hydro-lyase Arth_3576 (267 aa).

Belongs to the D-glutamate cyclase family.

This is Putative hydro-lyase Arth_3576 from Arthrobacter sp. (strain FB24).